The following is a 444-amino-acid chain: Phosphoglucosamine mutase (444 aa).

Catalysis depends on serine 102, which acts as the Phosphoserine intermediate. Positions 102, 241, 243, and 245 each coordinate Mg(2+). Phosphoserine is present on serine 102.

Belongs to the phosphohexose mutase family. Mg(2+) serves as cofactor. In terms of processing, activated by phosphorylation.

It catalyses the reaction alpha-D-glucosamine 1-phosphate = D-glucosamine 6-phosphate. Functionally, catalyzes the conversion of glucosamine-6-phosphate to glucosamine-1-phosphate. The protein is Phosphoglucosamine mutase of Haemophilus ducreyi (strain 35000HP / ATCC 700724).